The chain runs to 357 residues: Ribosomal RNA small subunit methyltransferase C (357 aa).

Belongs to the methyltransferase superfamily. RsmC family. In terms of assembly, monomer.

The protein resides in the cytoplasm. It catalyses the reaction guanosine(1207) in 16S rRNA + S-adenosyl-L-methionine = N(2)-methylguanosine(1207) in 16S rRNA + S-adenosyl-L-homocysteine + H(+). Specifically methylates the guanine in position 1207 of 16S rRNA in the 30S particle. The protein is Ribosomal RNA small subunit methyltransferase C of Colwellia psychrerythraea (strain 34H / ATCC BAA-681) (Vibrio psychroerythus).